The primary structure comprises 484 residues: MITIDKILEILKNDHNFREILFHEHYYYNWTQNVTFNALSYDSRQISSDTLFFAKGATFKKEYLDSAITAGLSFYVSETDYGADIPVILVNDIKKAMSLISMSFYNNPQNKLKLLAFTGTKGKTTAAYFAYHMLKVNHRPAMLSTMNTTLDGKSFFKSHLTTPESLDLFRMMATAVENQMTHLIMEVSSQAYLTKRVYGLTFDVGVFLNISPDHIGPIEHPTFEDYFFHKRLLMENSNAVVVNSQMDHFNIVKEQVEYIPHDFYGDYSENVITESKAFSFHVKGKLENTYDIKLIGKFNQENAIAAGLACLRLGVSIEDIKNGIAQTTVPGRMEVLTQTNGAKIFVDYAHNGDSLKKLLAVVEEHQKGDIILVLGAPGNKGQSRRKDFGDVINQHPNLQVILTADDPNFEDPLVISQEIASHINRPVTIIIDREEAIANASTLTNCKLDAIIIAGKGADAYQIIKGNRDNYSGDLEVAKKYLKR.

Residue S43 participates in UDP-N-acetyl-alpha-D-muramoyl-L-alanyl-D-glutamate binding. 119–125 provides a ligand contact to ATP; it reads GTKGKTT. UDP-N-acetyl-alpha-D-muramoyl-L-alanyl-D-glutamate is bound by residues 161-162, S188, and R196; that span reads TT. N6-carboxylysine is present on K230. The L-lysine recognition motif signature appears at 405–408; it reads DDPN.

It belongs to the MurCDEF family. MurE subfamily. Carboxylation is probably crucial for Mg(2+) binding and, consequently, for the gamma-phosphate positioning of ATP.

It is found in the cytoplasm. It catalyses the reaction UDP-N-acetyl-alpha-D-muramoyl-L-alanyl-D-glutamate + L-lysine + ATP = UDP-N-acetyl-alpha-D-muramoyl-L-alanyl-gamma-D-glutamyl-L-lysine + ADP + phosphate + H(+). It functions in the pathway cell wall biogenesis; peptidoglycan biosynthesis. In terms of biological role, catalyzes the addition of L-lysine to the nucleotide precursor UDP-N-acetylmuramoyl-L-alanyl-D-glutamate (UMAG) in the biosynthesis of bacterial cell-wall peptidoglycan. This Streptococcus agalactiae serotype V (strain ATCC BAA-611 / 2603 V/R) protein is UDP-N-acetylmuramoyl-L-alanyl-D-glutamate--L-lysine ligase.